A 95-amino-acid polypeptide reads, in one-letter code: Probable FAD-linked sulfhydryl oxidase OPG072 (95 aa).

Residues 1 to 8 (MNPKHWGR) lie on the Intravirion side of the membrane. Residues 1-95 (MNPKHWGRAA…AIDVSKVKPL (95 aa)) enclose the ERV/ALR sulfhydryl oxidase domain. A helical transmembrane segment spans residues 9 to 25 (AAWTIIFIVLSQAGLDG). Residues 26–95 (NIEACKRKLY…AIDVSKVKPL (70 aa)) are Virion surface-facing. A disulfide bond links Cys-43 and Cys-46.

The protein belongs to the orthopoxvirus OPG072 family. In terms of assembly, interacts with OPG128; this interaction involves formation of a transient disulfide-bonded intermediate, allowing disulfide bond transfer. Requires FAD as cofactor.

It localises to the virion membrane. The protein resides in the host cytoplasm. It catalyses the reaction 2 R'C(R)SH + O2 = R'C(R)S-S(R)CR' + H2O2. In terms of biological role, FAD-dependent sulfhydryl oxidase that catalyzes disulfide bond formation. The complete pathway for formation of disulfide bonds in intracellular virion membrane proteins sequentially involves thiol-disulfide transfer between OPG072, OPG128 and OPG088. The polypeptide is Probable FAD-linked sulfhydryl oxidase OPG072 (OPG072) (Variola virus (isolate Human/India/Ind3/1967) (VARV)).